Consider the following 114-residue polypeptide: Abscisic stress-ripening protein 2 (114 aa).

Disordered regions lie at residues 1 to 25 and 88 to 114; these read MAEE…GGPV and FHEH…HHHY. Residues 7 to 16 show a composition bias toward basic residues; the sequence is QHHHHLFHHK. The span at 97–107 shows a compositional bias: basic and acidic residues; the sequence is AKKEKKEVEGG.

The protein belongs to the abscisic acid and water stress-induced protein family.

The sequence is that of Abscisic stress-ripening protein 2 from Solanum lycopersicum (Tomato).